The following is a 1059-amino-acid chain: Isoleucine--tRNA ligase (1059 aa).

Positions 59 to 69 match the 'HIGH' region motif; that stretch reads PFANGLPHYGH. The 'KMSKS' region signature appears at 637–641; that stretch reads KMSKS. Lys-640 contacts ATP.

The protein belongs to the class-I aminoacyl-tRNA synthetase family. IleS type 2 subfamily. As to quaternary structure, monomer. Zn(2+) is required as a cofactor.

It localises to the cytoplasm. The enzyme catalyses tRNA(Ile) + L-isoleucine + ATP = L-isoleucyl-tRNA(Ile) + AMP + diphosphate. Catalyzes the attachment of isoleucine to tRNA(Ile). As IleRS can inadvertently accommodate and process structurally similar amino acids such as valine, to avoid such errors it has two additional distinct tRNA(Ile)-dependent editing activities. One activity is designated as 'pretransfer' editing and involves the hydrolysis of activated Val-AMP. The other activity is designated 'posttransfer' editing and involves deacylation of mischarged Val-tRNA(Ile). In Mycobacterium leprae (strain TN), this protein is Isoleucine--tRNA ligase.